A 284-amino-acid polypeptide reads, in one-letter code: RNase adapter protein RapZ (284 aa).

8-15 (GRSGSGKS) contacts ATP. 56–59 (DVRN) provides a ligand contact to GTP. An RNA-binding region spans residues 266–284 (RARGKNVQSRHRTLEKRKQ).

Belongs to the RapZ-like family. RapZ subfamily. In terms of assembly, homotrimer.

Functionally, modulates the synthesis of GlmS, by affecting the processing and stability of the regulatory small RNA GlmZ. When glucosamine-6-phosphate (GlcN6P) concentrations are high in the cell, RapZ binds GlmZ and targets it to cleavage by RNase E. Consequently, GlmZ is inactivated and unable to activate GlmS synthesis. Under low GlcN6P concentrations, RapZ is sequestered and inactivated by an other regulatory small RNA, GlmY, preventing GlmZ degradation and leading to synthesis of GlmS. The polypeptide is RNase adapter protein RapZ (Yersinia pseudotuberculosis serotype O:1b (strain IP 31758)).